The sequence spans 428 residues: Putative heme-binding peroxidase (428 aa).

The disordered stretch occupies residues 1–33 (MTAIQKPVVAKREAPKAEVNPTVSRSTQTETIK). Residues 21-32 (PTVSRSTQTETI) are compositionally biased toward polar residues. H188 acts as the Proton acceptor in catalysis. H312 serves as a coordination point for heme b. The active-site Tryptophan radical intermediate is the W328.

The protein belongs to the peroxidase family. Cytochrome c peroxidase subfamily. It depends on heme b as a cofactor.

Destroys radicals which are normally produced within the cells and which are toxic to biological systems. The chain is Putative heme-binding peroxidase from Debaryomyces hansenii (strain ATCC 36239 / CBS 767 / BCRC 21394 / JCM 1990 / NBRC 0083 / IGC 2968) (Yeast).